The following is a 110-amino-acid chain: Envelope glycoprotein N (110 aa).

Positions 1 to 17 (MTASTVALALFVASILG) are cleaved as a signal peptide. Topologically, residues 18–80 (HCWVTANSTG…SLSSFSSVWA (63 aa)) are virion surface. Over residues 28 to 41 (VASSTERSSPSTAG) the composition is skewed to polar residues. Residues 28–51 (VASSTERSSPSTAGLSARPSPGPT) are disordered. A helical membrane pass occupies residues 81–101 (LINALLVVVATFFYLVYLCFF). Residues 102 to 110 (KFVDEVVHA) lie on the Intravirion side of the membrane.

This sequence belongs to the herpesviridae glycoprotein N family. In terms of assembly, interacts (via N-terminus) with gM (via N-terminus). The gM-gN heterodimer forms the gCII complex. In terms of processing, O-glycosylated. Contains alpha 2,6-sialic acid residues. N-glycosylated.

The protein localises to the virion membrane. The protein resides in the host membrane. Its subcellular location is the host Golgi apparatus. It is found in the host trans-Golgi network. Its function is as follows. Envelope glycoprotein necessary for proper maturation of gM and modulation of its membrane fusion activity. Also plays a critical role in virion morphogenesis. The chain is Envelope glycoprotein N from Homo sapiens (Human).